A 1036-amino-acid polypeptide reads, in one-letter code: Isoleucine--tRNA ligase (1036 aa).

Residues 46 to 56 (PFATGLPHYGH) carry the 'HIGH' region motif. The 'KMSKS' region signature appears at 589–593 (KMSKR). Lysine 592 contacts ATP.

This sequence belongs to the class-I aminoacyl-tRNA synthetase family. IleS type 2 subfamily. Monomer. It depends on Zn(2+) as a cofactor.

The protein resides in the cytoplasm. The catalysed reaction is tRNA(Ile) + L-isoleucine + ATP = L-isoleucyl-tRNA(Ile) + AMP + diphosphate. Catalyzes the attachment of isoleucine to tRNA(Ile). As IleRS can inadvertently accommodate and process structurally similar amino acids such as valine, to avoid such errors it has two additional distinct tRNA(Ile)-dependent editing activities. One activity is designated as 'pretransfer' editing and involves the hydrolysis of activated Val-AMP. The other activity is designated 'posttransfer' editing and involves deacylation of mischarged Val-tRNA(Ile). This Chlamydia trachomatis serovar A (strain ATCC VR-571B / DSM 19440 / HAR-13) protein is Isoleucine--tRNA ligase.